Reading from the N-terminus, the 406-residue chain is Succinylornithine transaminase (406 aa).

Lys252 carries the N6-(pyridoxal phosphate)lysine modification.

This sequence belongs to the class-III pyridoxal-phosphate-dependent aminotransferase family. AstC subfamily. Pyridoxal 5'-phosphate serves as cofactor.

The catalysed reaction is N(2)-succinyl-L-ornithine + 2-oxoglutarate = N-succinyl-L-glutamate 5-semialdehyde + L-glutamate. It functions in the pathway amino-acid degradation; L-arginine degradation via AST pathway; L-glutamate and succinate from L-arginine: step 3/5. Catalyzes the transamination of N(2)-succinylornithine and alpha-ketoglutarate into N(2)-succinylglutamate semialdehyde and glutamate. Can also act as an acetylornithine aminotransferase. The sequence is that of Succinylornithine transaminase from Escherichia coli O139:H28 (strain E24377A / ETEC).